The following is a 451-amino-acid chain: Enolase (451 aa).

Gln167 serves as a coordination point for (2R)-2-phosphoglycerate. Glu209 functions as the Proton donor in the catalytic mechanism. Mg(2+) is bound by residues Asp250, Glu307, and Asp334. (2R)-2-phosphoglycerate-binding residues include Lys359, Arg388, Ser389, and Lys410. Lys359 acts as the Proton acceptor in catalysis.

This sequence belongs to the enolase family. It depends on Mg(2+) as a cofactor.

Its subcellular location is the cytoplasm. It is found in the secreted. The protein localises to the cell surface. It catalyses the reaction (2R)-2-phosphoglycerate = phosphoenolpyruvate + H2O. The protein operates within carbohydrate degradation; glycolysis; pyruvate from D-glyceraldehyde 3-phosphate: step 4/5. In terms of biological role, catalyzes the reversible conversion of 2-phosphoglycerate (2-PG) into phosphoenolpyruvate (PEP). It is essential for the degradation of carbohydrates via glycolysis. This chain is Enolase, found in Mesomycoplasma hyopneumoniae (strain J / ATCC 25934 / NCTC 10110) (Mycoplasma hyopneumoniae).